Reading from the N-terminus, the 513-residue chain is Zinc finger CCCH-type with G patch domain-containing protein (513 aa).

Methionine 1 carries the N-acetylmethionine modification. The disordered stretch occupies residues 90 to 131 (EVPVAPGAELETVPSRETGPGPTERGQEEDDGEDEEGGAALS). Residues 116–126 (QEEDDGEDEEG) show a composition bias toward acidic residues. The C3H1-type zinc finger occupies 176–202 (KSLKPCSFFLEGKCRFQENCRFSHGQV). The tract at residues 267-296 (LPPLRTEPAGSSDSDGSDADDPSYARVVEP) is disordered. A phosphoserine mark is found at serine 278 and serine 355. The G-patch domain maps to 315–361 (TRGIGSRLLAKMGYEFGKGLGRHAEGRVEPVHAVVLPRGKSLDQCAE). Disordered stretches follow at residues 367–394 (TRAG…PPPR) and 492–513 (AQEA…MTEF). Over residues 497–513 (LQREQRKADTHKKMTEF) the composition is skewed to basic and acidic residues.

In terms of assembly, interacts with CHD4/Mi-2; the interaction is direct.

It is found in the nucleus. In terms of biological role, transcription repressor that specifically binds the 5'-GGAG[GA]A[GA]A-3' consensus sequence. Represses transcription by recruiting the chromatin multiprotein complex NuRD to target promoters. Negatively regulates expression of EGFR, a gene involved in cell proliferation, survival and migration. Its ability to repress genes of the EGFR pathway suggest it may act as a tumor suppressor. This chain is Zinc finger CCCH-type with G patch domain-containing protein (ZGPAT), found in Bos taurus (Bovine).